A 572-amino-acid polypeptide reads, in one-letter code: Chromatin assembly factor 1 subunit B (572 aa).

WD repeat units follow at residues 11-54 (HNKE…DGKA), 64-103 (RHTK…EPEQ), 127-166 (GHLE…KISI), 169-208 (EHKS…VAFN), 228-279 (FHDD…RPIA), 301-347 (RPVA…PFGY), and 351-392 (IHYH…IPLK). Threonine 401 is subject to Phosphothreonine. The tract at residues 403 to 572 (DTAKKAKNQT…LAPDDSSKTV (170 aa)) is disordered. Residues 411-430 (QTHQGSSPGSRSVEGTPSNR) show a composition bias toward polar residues. Serine 416 is subject to Phosphoserine. Residue threonine 426 is modified to Phosphothreonine. Residues 431-452 (TQDPSSPCTTPSPTTQSPAPSA) are compositionally biased toward low complexity. Position 436 is a phosphoserine (serine 436). Threonine 440 bears the Phosphothreonine mark. Residues serine 456 and serine 465 each carry the phosphoserine modification. N6-acetyllysine is present on lysine 501. Phosphothreonine is present on residues threonine 502 and threonine 510. Polar residues predominate over residues 511–529 (PLKTDTVPNPQPNSGTAPS). Basic and acidic residues predominate over residues 546 to 559 (PELKRPRLEEREGD).

Belongs to the WD repeat HIR1 family. As to quaternary structure, subunit of the CAF-1 complex that contains RBBP4, CHAF1B and CHAF1A. CHAF1A binds directly to CHAF1B. Interacts with histones H3.1, H3.2 and H3.1t.

Its subcellular location is the nucleus. The protein resides in the cytoplasm. Functionally, acts as a component of the histone chaperone complex chromatin assembly factor 1 (CAF-1), which assembles histone octamers onto DNA during replication and repair. CAF-1 performs the first step of the nucleosome assembly process, bringing newly synthesized histones H3 and H4 to replicating DNA; histones H2A/H2B can bind to this chromatin precursor subsequent to DNA replication to complete the histone octamer. The protein is Chromatin assembly factor 1 subunit B of Mus musculus (Mouse).